Reading from the N-terminus, the 278-residue chain is E3 ubiquitin-protein ligase MARCHF5 (278 aa).

The segment at 6–75 (LQQMLDRSCW…PQCNAEYLIV (70 aa)) adopts an RING-CH-type zinc-finger fold. Residues Cys-14, Cys-17, Cys-33, Cys-35, His-43, Cys-46, Cys-65, and Cys-68 each contribute to the Zn(2+) site. Transmembrane regions (helical) follow at residues 99-119 (FAAA…YGAV), 139-159 (PLFL…GKMI), 209-229 (ILCG…LMFS), and 238-258 (TILG…YFKQ).

Monomer and homodimer. Interacts with MFN1, MFN2, DNM1L and FIS1. In terms of processing, autoubiquitinated leading to degradation (short half-life).

The protein resides in the mitochondrion outer membrane. The catalysed reaction is S-ubiquitinyl-[E2 ubiquitin-conjugating enzyme]-L-cysteine + [acceptor protein]-L-lysine = [E2 ubiquitin-conjugating enzyme]-L-cysteine + N(6)-ubiquitinyl-[acceptor protein]-L-lysine.. It functions in the pathway protein modification; protein ubiquitination. Its function is as follows. Mitochondrial E3 ubiquitin-protein ligase that plays a crucial role in the control of mitochondrial morphology by acting as a positive regulator of mitochondrial fission and as an important regulator of immune response. Plays a crucial role in maintaining mitochondrial homeostasis by regulating the dynamics of mitochondria through the ubiquitination of key proteins involved in fission and fusion such as FIS1, DNM1L and MFN1. Acts as a critical determinant of mitotic apoptosis through both MCL1-dependent and -independent pathways. Turns off persistent immune signaling by degrading oligomeric complexes of retinoic acid-inducible gene I/DDX58 and mitochondrial antiviral-signaling protein/MAVS formed upon RNA virus infection. Promotes STING-mediated type-I interferon production via 'Lys-63'-linked ubiquitination of STING1 thereby preserving its activity and preventing the formation of inactive STING1 polymers. Plays also an essential role in the formation of PEX3-containing vesicles in the de novo biogenesis of peroxisomes from mitochondria. Acts as a regulator of NLRP3 inflammasome activation on the mitochondria by mediating the 'Lys-27'-linked polyubiquitination of NLRP3, positively regulating the NLRP3-NEK7 complex formation and NLRP3 oligomerization. The protein is E3 ubiquitin-protein ligase MARCHF5 (MARCHF5) of Bos taurus (Bovine).